We begin with the raw amino-acid sequence, 383 residues long: Succinate--CoA ligase [ADP-forming] subunit beta 2 (383 aa).

The ATP-grasp domain occupies Arg9 to Arg231. ATP is bound by residues Lys45, Gly52–Gly54, Cys94, and Glu99. Mg(2+) is bound by residues Asn187 and Asp201. Substrate-binding positions include Asn251 and Gly308–Thr310.

The protein belongs to the succinate/malate CoA ligase beta subunit family. As to quaternary structure, heterotetramer of two alpha and two beta subunits. Requires Mg(2+) as cofactor.

It carries out the reaction succinate + ATP + CoA = succinyl-CoA + ADP + phosphate. The enzyme catalyses GTP + succinate + CoA = succinyl-CoA + GDP + phosphate. Its pathway is carbohydrate metabolism; tricarboxylic acid cycle; succinate from succinyl-CoA (ligase route): step 1/1. Functionally, succinyl-CoA synthetase functions in the citric acid cycle (TCA), coupling the hydrolysis of succinyl-CoA to the synthesis of either ATP or GTP and thus represents the only step of substrate-level phosphorylation in the TCA. The beta subunit provides nucleotide specificity of the enzyme and binds the substrate succinate, while the binding sites for coenzyme A and phosphate are found in the alpha subunit. This Streptomyces coelicolor (strain ATCC BAA-471 / A3(2) / M145) protein is Succinate--CoA ligase [ADP-forming] subunit beta 2.